The chain runs to 1401 residues: MAPQMYEFHLPLSPEELLKSGGVNQYVVQEVLSIKHLPPQLRAFQAAFRAQGPLAMLQHFDTIYSILHHFRSIDPGLKEDTLQFLIKVVSRHSQELPAILDDTTLSGSDRNAHLNALKMNCYALIRLLESFETMASQTNLVDLDLGGKGKKARTKAAHGFDWEEERQPILQLLTQLLQLDIRHLWNHSIIEEEFVSLVTGCCYRLLENPTINHQKNRPTREAITHLLGVALTRYNHMLSATVKIIQMLQHFEHLAPVLVAAVSLWATDYGMKSIVGEIVREIGQKCPQELSRDPSGTKGFAAFLTELAERVPAILMSSMCILLDHLDGENYMMRNAVLAAMAEMVLQVLSGDQLEAAARDTRDQFLDTLQAHGHDVNSFVRSRVLQLFTRIVQQKALPLTRFQAVVALAVGRLADKSVLVCKNAIQLLASFLANNPFSCKLSDADLAGPLQKETQKLQEMRAQRRTAAASAVLDPEEEWEAMLPELKSTLQQLLQLPQGEEEIPEQIANTETTEDVKGRIYQLLAKASYKKAIILTREATGHFQESEPFSHIDPEESEETRLLNILGLIFKGPAASTQEKNPRESTGNMVTGQTVCKNKPNMSDPEESRGNDELVKQEMLVQYLQDAYSFSRKITEAIGIISKMMYENTTTVVQEVIEFFVMVFQFGVPQALFGVRRMLPLIWSKEPGVREAVLNAYRQLYLNPKGDSARAKAQALIQNLSLLLVDASVGTIQCLEEILCEFVQKDELKPAVTQLLWERATEKVACCPLERCSSVMLLGMMARGKPEIVGSNLDTLVSIGLDEKFPQDYRLAQQVCHAIANISDRRKPSLGKRHPPFRLPQEHRLFERLRETVTKGFVHPDPLWIPFKEVAVTLIYQLAEGPEVICAQILQGCAKQALEKLEEKRTSQEDPKESPAMLPTFLLMNLLSLAGDVALQQLVHLEQAVSGELCRRRVLREEQEHKTKDPKEKNTSSETTMEEELGLVGATADDTEAELIRGICEMELLDGKQTLAAFVPLLLKVCNNPGLYSNPDLSAAASLALGKFCMISATFCDSQLRLLFTMLEKSPLPIVRSNLMVATGDLAIRFPNLVDPWTPHLYARLRDPAQQVRKTAGLVMTHLILKDMVKVKGQVSEMAVLLIDPEPQIAALAKNFFNELSHKGNAIYNLLPDIISRLSDPELGVEEEPFHTIMKQLLSYITKDKQTESLVEKLCQRFRTSRTERQQRDLAYCVSQLPLTERGLRKMLDNFDCFGDKLSDESIFSAFLSVVGKLRRGAKPEGKAIIDEFEQKLRACHTRGLDGIKELEIGQAGSQRAPSAKKPSTGSRYQPLASTASDNDFVTPEPRRTTRRHPNTQQRASKKKPKVVFSSDESSEEDLSAEMTEDETPKKTTPILRASARRHRS.

The tract at residues 1–603 (MAPQMYEFHL…TVCKNKPNMS (603 aa)) is interactions with SMC2 and SMC4. A phosphoserine mark is found at serine 20 and serine 585. A compositionally biased stretch (polar residues) spans 576–596 (STQEKNPRESTGNMVTGQTVC). Disordered stretches follow at residues 576-611 (STQEKNPRESTGNMVTGQTVCKNKPNMSDPEESRGN), 956-978 (REEQEHKTKDPKEKNTSSETTME), and 1303-1401 (LEIG…RHRS). Over residues 956–971 (REEQEHKTKDPKEKNT) the composition is skewed to basic and acidic residues. Polar residues predominate over residues 1308–1336 (AGSQRAPSAKKPSTGSRYQPLASTASDND). Phosphoserine is present on residues serine 1310, serine 1315, and serine 1330. Residue threonine 1331 is modified to Phosphothreonine. Serine 1333 is subject to Phosphoserine. Threonine 1339 is modified (phosphothreonine). The Bipartite nuclear localization signal motif lies at 1342 to 1362 (PRRTTRRHPNTQQRASKKKPK). Over residues 1345 to 1362 (TTRRHPNTQQRASKKKPK) the composition is skewed to basic residues. Phosphoserine occurs at positions 1366, 1367, 1370, 1371, and 1376. Residues 1369–1382 (ESSEEDLSAEMTED) are compositionally biased toward acidic residues. Residues threonine 1384 and threonine 1389 each carry the phosphothreonine; by CDK1 modification. Serine 1395 bears the Phosphoserine mark.

The protein belongs to the CND1 (condensin subunit 1) family. As to quaternary structure, component of the condensin complex, which contains the SMC2 and SMC4 heterodimer, and three non SMC subunits that probably regulate the complex: NCAPH/BRRN1, NCAPD2/CAPD2 and NCAPG. Interacts with histones H1 and H3. Post-translationally, phosphorylated by CDK1. Its phosphorylation, as well as that of NCAPH and NCAPG subunits, activates the condensin complex and is required for chromosome condensation.

Its subcellular location is the nucleus. The protein localises to the cytoplasm. It is found in the chromosome. In terms of biological role, regulatory subunit of the condensin complex, a complex required for conversion of interphase chromatin into mitotic-like condense chromosomes. The condensin complex probably introduces positive supercoils into relaxed DNA in the presence of type I topoisomerases and converts nicked DNA into positive knotted forms in the presence of type II topoisomerases. May target the condensin complex to DNA via its C-terminal domain. May promote the resolution of double-strand DNA catenanes (intertwines) between sister chromatids. Condensin-mediated compaction likely increases tension in catenated sister chromatids, providing directionality for type II topoisomerase-mediated strand exchanges toward chromatid decatenation. Required for decatenation of non-centromeric ultrafine DNA bridges during anaphase. Early in neurogenesis, may play an essential role to ensure accurate mitotic chromosome condensation in neuron stem cells, ultimately affecting neuron pool and cortex size. The chain is Condensin complex subunit 1 from Homo sapiens (Human).